Reading from the N-terminus, the 362-residue chain is Putative integrase ORF3 (362 aa).

Positions 179–359 (YEVKEIGLLQ…TPFNFLNSLS (181 aa)) constitute an Integrase catalytic domain. 2 residues coordinate Mg(2+): aspartate 190 and aspartate 256.

The protein belongs to the plectrovirus integrase ORF3 family.

In terms of biological role, this protein may encode an integrase, which is necessary for integration of the viral DNA into host genome. The polypeptide is Putative integrase ORF3 (Spiroplasma melliferum (SpV1)).